We begin with the raw amino-acid sequence, 394 residues long: S-adenosylmethionine synthase (394 aa).

Residue His-16 coordinates ATP. Asp-18 lines the Mg(2+) pocket. Position 44 (Glu-44) interacts with K(+). L-methionine-binding residues include Glu-57 and Gln-100. Positions 100–110 are flexible loop; the sequence is QSPDIAQGVDA. Residues 172-174, 239-240, Asp-248, 254-255, Ala-271, and Lys-275 each bind ATP; these read DAK, RF, and RK. Asp-248 contributes to the L-methionine binding site. Residue Lys-279 participates in L-methionine binding.

This sequence belongs to the AdoMet synthase family. Homotetramer; dimer of dimers. Requires Mg(2+) as cofactor. The cofactor is K(+).

It is found in the cytoplasm. The catalysed reaction is L-methionine + ATP + H2O = S-adenosyl-L-methionine + phosphate + diphosphate. The protein operates within amino-acid biosynthesis; S-adenosyl-L-methionine biosynthesis; S-adenosyl-L-methionine from L-methionine: step 1/1. Its function is as follows. Catalyzes the formation of S-adenosylmethionine (AdoMet) from methionine and ATP. The overall synthetic reaction is composed of two sequential steps, AdoMet formation and the subsequent tripolyphosphate hydrolysis which occurs prior to release of AdoMet from the enzyme. The polypeptide is S-adenosylmethionine synthase (Enterococcus faecalis (strain ATCC 700802 / V583)).